Reading from the N-terminus, the 95-residue chain is Acylphosphatase (95 aa).

In terms of domain architecture, Acylphosphatase-like spans 5–93 (RAHVFIRGKV…GEFKDFKILP (89 aa)). Catalysis depends on residues R20 and N38.

The protein belongs to the acylphosphatase family.

The catalysed reaction is an acyl phosphate + H2O = a carboxylate + phosphate + H(+). This chain is Acylphosphatase (acyP), found in Pyrobaculum aerophilum (strain ATCC 51768 / DSM 7523 / JCM 9630 / CIP 104966 / NBRC 100827 / IM2).